A 690-amino-acid chain; its full sequence is MNSNFNQHFERIKELRALLNKANYSYYVLDSPEIDDSVYDQLYRELIEIENIHPSLITDDSPSQRLGGVPSKGFKNVEHNIPLLSLDNAFNLNEVEAWYGRISKLISSENKNIKKVYDPELICELKIDGNAISLRYENGILTRATTRGDGKTGEDITTNIRTISTIPLRLLLENPPLWVEIRGEAFMPNNIFNKLNIERKNNDQPLFANPRNSCAGTLRQLDPKIVASRKLDFFAYSLYFPENWEPTDNNFKKPISQSESLEFLKNIGFKVNTTYETTKTLNEANKYYKYWEVKKDFLAYATDGIVVKIDKFEIQNLLGATNKAPRWAIAVKYPAEEKATKLRKIIFQVGRSGAVTPVAEFESIELAGTSVNRATLHNAKRLASLDLHYEDTIIVRKAGEIIPEVIRVIKEFRKVDAKLVQLPQNCPECNSKLILESNEAITKCINYRCAAKLKGLLRHWVSKGSMNIDGLGEKIINQLVNEGYVKSIADLYKLEIDSLLELERFGEKSANNLLIEINESKNKNWHKQLYGLGIPHIGEANAKSLSNNFNSIEELNAIAKESPEKISNIYGFGNEMKDAIVKWFDDSNNQTLIKELKAIGFSLKESLDSNYNSNQSNVFDGKSFVLTGTLDSLTRDEAKELIESAGGKVSSSISKKTDFLVSGEKAGSKLNKAQELGVKIINENELKLLL.

NAD(+) contacts are provided by residues 36 to 40, 85 to 86, and Glu-124; these read DSVYD and SL. Catalysis depends on Lys-126, which acts as the N6-AMP-lysine intermediate. 4 residues coordinate NAD(+): Arg-147, Glu-184, Lys-308, and Lys-332. The Zn(2+) site is built by Cys-426, Cys-429, Cys-444, and Cys-449. Residues 614–690 enclose the BRCT domain; sequence NQSNVFDGKS…INENELKLLL (77 aa).

The protein belongs to the NAD-dependent DNA ligase family. LigA subfamily. Requires Mg(2+) as cofactor. The cofactor is Mn(2+).

The catalysed reaction is NAD(+) + (deoxyribonucleotide)n-3'-hydroxyl + 5'-phospho-(deoxyribonucleotide)m = (deoxyribonucleotide)n+m + AMP + beta-nicotinamide D-nucleotide.. In terms of biological role, DNA ligase that catalyzes the formation of phosphodiester linkages between 5'-phosphoryl and 3'-hydroxyl groups in double-stranded DNA using NAD as a coenzyme and as the energy source for the reaction. It is essential for DNA replication and repair of damaged DNA. The protein is DNA ligase of Prochlorococcus marinus (strain NATL2A).